Consider the following 59-residue polypeptide: Large ribosomal subunit protein bL32 (59 aa).

The disordered stretch occupies residues 35–59; that stretch reads EAHLRHHISPNGYYRGRKVVKTKND. Residues 49–59 are compositionally biased toward basic residues; it reads RGRKVVKTKND.

It belongs to the bacterial ribosomal protein bL32 family.

The chain is Large ribosomal subunit protein bL32 from Polynucleobacter asymbioticus (strain DSM 18221 / CIP 109841 / QLW-P1DMWA-1) (Polynucleobacter necessarius subsp. asymbioticus).